Consider the following 453-residue polypeptide: MKREARNYIDNKLKPPKAFFDWCFSQIPTYKWSNKKETILASNRKNCSVIEQKLRKNSRLTFFGKLNVFGIVLVTSKRIEIQSYAFWNRVVEGKEMIEFDLVNFEQFADGEHVKVAISDGKMWFGLIPIYGGMSGGPYSMIRLFENDWKEKIRSKSELKYLEIPHLDFKEIETIYKYRVEIEFLQKIKARQLSKEVMYPVTQYTNGSFRKTVDMRTINAKWLKENKPFFKNSDRGFMEFELARRIQKRRGKVVSGIEKYLDYRAINKIPEGVGIVRFQNWIIKNKVDFSYYLDYLNLMRDLNIAIDSENIIMPKNLVIAHDNAVKLLYQMKHEVEEQQYKMRFEKIKDLEKTIDNYAFIVPKQASDLLTEGKALSHCVGGSNYIKQHIEGKTTIIFVRDKQYLEKSLYTLEYKNGQIYQLRGKHNCEPTHDVQEAANNWAASVKSKTKVLQHS.

The protein to S.faecalis plasmid PAM373 EP0012.

This is an uncharacterized protein from Listeria innocua serovar 6a (strain ATCC BAA-680 / CLIP 11262).